We begin with the raw amino-acid sequence, 714 residues long: MGVTVIPRLLGLKDEKKIATTVGEARLSGINYRHPDSALVSYPVAAAAPLGRLPAGNYRIAIVGGGAGGIAALYELGRLAATLPAGSGIDVQIYEADPDSFLHDRPGIKAIKVRGLKAGRVSAALVHNGDPASGDTIYEVGAMRFPEIAGLTWHYASAAFGDAAPIKVFPNPGKVPTEFVFGNRVDRYVGSDPKDWEDPDSPTLKVLGVVAGGLVGNPQGENVAMYPIANVDPAKIAAILNAATPPADALERIQTKYWPEFIAQYDGLTLGAAVREIVTVAFEKGTLPPVDGVLDVDESISYYVELFGRFGFGTGGFKPLYNISLVEMMRLILWDYSNEYTLPVTENVEFIRNLFLKAQNVGAGKLVVQVRQERVANACHSGTASARAQLLSYDSHNAVHSEAYDFVILAVPHDQLTPIVSRSGFEHAASQNLGDAGLGLETHTYNQVYPPLLLSDSSPAANARIVTAIGQLHMARSSKVFATVKTAALDQPWVPQWRGEPIKAVVSDSGLAASYVVPSPIVEDGQAPEYSSLLASYTWEDDSTRLRHDFGLYPQNPATETGTADGMYRTMVNRAYRYVKYAGASNAQPWWFYQLLAEARTADRFVFDWTTNKTAGGFKLDMTGDHHQSNLCFRYHTHALAASLDNRFFIASDSYSHLGGWLEGAFMSALNAVAGLIVRANRGDVSALSTEARPLVIGLRPVVKVPAAELATSQ.

Residues 1–15 constitute a propeptide, removed in mature form; occupies the channel of the substrate amino acid from the outside of the protein to the interior flavin ring in the precursor; the sequence is MGVTVIPRLLGLKDE. FAD contacts are provided by residues Gly2, Gly68, and 95 to 96; that span reads EA. The propeptide at 108–109 is linker peptide; the sequence is IK. Residues Arg120, 141 to 144, and Val375 contribute to the FAD site; that span reads GAMR. Arg144 is a substrate binding site. Tyr537 is a substrate binding site. FAD contacts are provided by residues 652 to 653 and 660 to 662; these read SD and GWL. Gly660 is a binding site for substrate.

This sequence belongs to the phenylalanine 2-monooxygenase family. In terms of assembly, heterotetramer composed of 2 alpha and 2 beta subunits. Requires FAD as cofactor. In terms of processing, proteolytically cleaved to yield the active enzyme. Cleavage of the linkage between the 2 subunits causes reshaping of the oxygen channel and the hydrophobic environment around the flavin ring. Removal of the prosequence causes opening of the amino acid channel.

It carries out the reaction L-phenylalanine + O2 = 2-phenylacetamide + CO2 + H2O. In terms of biological role, catalyzes both oxygenative decarboxylation and oxidative deamination, depending on the substrate used. Has high activity for L-Phe and L-Tyr, but relatively low activities for L-Met and L-Trp. L-Phe is mainly oxygenated and L-Met is mainly oxidized. In Pseudomonas sp, this protein is Phenylalanine 2-monooxygenase precursor.